Reading from the N-terminus, the 133-residue chain is Ribosomal RNA large subunit methyltransferase H 1 (133 aa).

Residues Ile55, Gly89, and 101 to 106 contribute to the S-adenosyl-L-methionine site; that span reads ISPMEM.

The protein belongs to the RNA methyltransferase RlmH family. In terms of assembly, homodimer.

The protein localises to the cytoplasm. The enzyme catalyses pseudouridine(1915) in 23S rRNA + S-adenosyl-L-methionine = N(3)-methylpseudouridine(1915) in 23S rRNA + S-adenosyl-L-homocysteine + H(+). Its function is as follows. Specifically methylates the pseudouridine at position 1915 (m3Psi1915) in 23S rRNA. This Thermoanaerobacter sp. (strain X514) protein is Ribosomal RNA large subunit methyltransferase H 1.